The primary structure comprises 211 residues: Putative F-box protein At1g52490 (211 aa).

The F-box domain maps to 12–59 (EEEYLQLPLDLIVEILKKLPLKSLVRFRCVSKQFSTIICSLRDFIESV).

The polypeptide is Putative F-box protein At1g52490 (Arabidopsis thaliana (Mouse-ear cress)).